Here is a 142-residue protein sequence, read N- to C-terminus: Small ribosomal subunit protein bS18c (142 aa).

Positions 1-21 (MDRITGPFRKSKKSFRKPLPP) are disordered.

It belongs to the bacterial ribosomal protein bS18 family. As to quaternary structure, part of the 30S ribosomal subunit.

Its subcellular location is the plastid. This chain is Small ribosomal subunit protein bS18c, found in Cuscuta gronovii (Common dodder).